Here is a 1026-residue protein sequence, read N- to C-terminus: Isoleucine--tRNA ligase (1026 aa).

Residues 51-61 carry the 'HIGH' region motif; the sequence is PTANGRPHIGH. Positions 591–595 match the 'KMSKS' region motif; that stretch reads KMSKS. Residue K594 coordinates ATP.

The protein belongs to the class-I aminoacyl-tRNA synthetase family. IleS type 2 subfamily. In terms of assembly, monomer. Requires Zn(2+) as cofactor.

It localises to the cytoplasm. The catalysed reaction is tRNA(Ile) + L-isoleucine + ATP = L-isoleucyl-tRNA(Ile) + AMP + diphosphate. Functionally, catalyzes the attachment of isoleucine to tRNA(Ile). As IleRS can inadvertently accommodate and process structurally similar amino acids such as valine, to avoid such errors it has two additional distinct tRNA(Ile)-dependent editing activities. One activity is designated as 'pretransfer' editing and involves the hydrolysis of activated Val-AMP. The other activity is designated 'posttransfer' editing and involves deacylation of mischarged Val-tRNA(Ile). This Thermoplasma acidophilum (strain ATCC 25905 / DSM 1728 / JCM 9062 / NBRC 15155 / AMRC-C165) protein is Isoleucine--tRNA ligase.